The primary structure comprises 160 residues: Regulatory protein RecX (160 aa).

It belongs to the RecX family.

It is found in the cytoplasm. In terms of biological role, modulates RecA activity. The protein is Regulatory protein RecX of Pelodictyon phaeoclathratiforme (strain DSM 5477 / BU-1).